A 348-amino-acid polypeptide reads, in one-letter code: Protein pof5 (348 aa).

It to yeast YDR306C. In terms of assembly, interacts with skp1.

It localises to the mitochondrion. The sequence is that of Protein pof5 (pof5) from Schizosaccharomyces pombe (strain 972 / ATCC 24843) (Fission yeast).